The sequence spans 157 residues: Probable calcium-binding protein CML23 (157 aa).

4 consecutive EF-hand domains span residues 11–46, 47–82, 86–121, and 122–157; these read GSME…LSPN, ASQE…SDQS, SAIR…LGEK, and CSIQ…NGSA. Positions 24, 26, 28, 30, 35, 60, 62, 64, 71, 99, 101, 103, 105, 110, 135, 137, 139, 141, and 146 each coordinate Ca(2+).

Potential calcium sensor. The sequence is that of Probable calcium-binding protein CML23 (CML23) from Arabidopsis thaliana (Mouse-ear cress).